The following is an 872-amino-acid chain: Protein SEY1 (872 aa).

Residues 1 to 749 (MVANGHFAGV…KRSAIGGITQ (749 aa)) are Cytoplasmic-facing. Positions 49–307 (GFNYHLISVF…IPADGFAVYA (259 aa)) constitute a GB1/RHD3-type G domain. GTP is bound at residue 59-66 (GSQSTGKS). A coiled-coil region spans residues 482–504 (SNYQQELSLYQKDLENIGGQLRR). A disordered region spans residues 676–704 (LDKWIGHTPSSATPADEEDLTPIGGVDED). Residues 690–704 (ADEEDLTPIGGVDED) are compositionally biased toward acidic residues. The helical transmembrane segment at 750–770 (VPLYFYGLLLALGWNEIVAVL) threads the bilayer. Residues 771–773 (RNP) lie on the Lumenal side of the membrane. Residues 774–794 (AYFLLLFVCAVTAYVTYQLNL) traverse the membrane as a helical segment. Over 795–872 (WGPIIKMTEA…IDDADDDDDF (78 aa)) the chain is Cytoplasmic. The tract at residues 849-872 (NRKSAGGFQNNRSHIDDADDDDDF) is disordered.

This sequence belongs to the TRAFAC class dynamin-like GTPase superfamily. GB1/RHD3 GTPase family. RHD3 subfamily.

The protein resides in the endoplasmic reticulum membrane. Cooperates with the reticulon proteins and tubule-shaping DP1 family proteins to generate and maintain the structure of the tubular endoplasmic reticulum network. Has GTPase activity, which is required for its function in ER organization. The protein is Protein SEY1 of Paracoccidioides brasiliensis (strain Pb18).